A 336-amino-acid polypeptide reads, in one-letter code: Iron-uptake system permease protein FeuC (336 aa).

Helical transmembrane passes span 7–27, 57–77, 85–105, 120–140, 150–170, 191–211, 246–266, 280–300, and 308–328; these read LFIA…SFSV, VVMA…IQAI, PGIL…MLLF, MPLF…IFAW, IILV…FLSL, ANWT…PILI, VAII…GLIA, YILP…DFAG, and EVPA…YLLF.

Belongs to the binding-protein-dependent transport system permease family. FecCD subfamily. The complex is composed of one ATP-binding protein (YusV), two transmembrane proteins (FeuB and FeuC) and a solute-binding protein (FeuA).

Its subcellular location is the cell membrane. Its function is as follows. Involved in the uptake of iron. Probably responsible for the translocation of the substrate across the membrane. Part of the ABC transporter complex FeuABC/YusV involved in import of the catecholate siderophores bacillibactin and enterobactin. The chain is Iron-uptake system permease protein FeuC (feuC) from Bacillus subtilis (strain 168).